Here is a 1383-residue protein sequence, read N- to C-terminus: DNA-directed RNA polymerase subunit beta (1383 aa).

It belongs to the RNA polymerase beta chain family. The RNAP catalytic core consists of 2 alpha, 1 beta, 1 beta' and 1 omega subunit. When a sigma factor is associated with the core the holoenzyme is formed, which can initiate transcription.

The enzyme catalyses RNA(n) + a ribonucleoside 5'-triphosphate = RNA(n+1) + diphosphate. In terms of biological role, DNA-dependent RNA polymerase catalyzes the transcription of DNA into RNA using the four ribonucleoside triphosphates as substrates. The protein is DNA-directed RNA polymerase subunit beta of Anaplasma phagocytophilum (strain HZ).